A 499-amino-acid chain; its full sequence is MRVLVPPAERSQDTRVGAPAWREAAQAMARTAHILTDRCGQEAVTMWQPKDSVLDPNVAHHLGRAAYIQPWRFRVEMIKGGGTLEKPPPGEGVTLWKGKMKPPAWYARLPLPLHRKARALQTTEVVHAHARGARLTAARLGRAQHQINGRVRQLLRQREVTDHRLSEVRKGLLINQQSVKLRGYRPKSEKVPDKADSMLTWEKEELKSMKRKMERDMEKSEVLLKTLASCRDTLNFCFKERLQAVDLMNQPLDKVLEQARRHSWVNLSRAPTPRTQGQKTPPPDPVGTYNPACALALNEAKRLLVESKDTLVEMAKNEVDVREQQLQISDRVCASLAQKASETLELKERLNMTLGLMRGTILRCTKYNQELYTTHGLIKGPLSKVHLETAEKLDRPLVRMYQRHVGTQLPEAARLAQGTDKLQCHITYLEKNLDELLATHKNLSWGLNCKNIGHEVDGNVVRLRLRQRQPHVCYEQAQRLVKDWDPRTPPPRSKSSADP.

2 coiled-coil regions span residues 197–227 (SMLT…LKTL) and 297–317 (LNEA…MAKN). Y372 is modified (phosphotyrosine).

In terms of assembly, microtubule inner protein component of sperm flagellar doublet microtubules.

The protein localises to the cytoplasm. The protein resides in the cytoskeleton. Its subcellular location is the flagellum axoneme. In terms of biological role, microtubule inner protein (MIP) part of the dynein-decorated doublet microtubules (DMTs) in sperm flagellar axoneme, which is required for motile flagellum beating. Forms an extensive interaction network cross-linking the lumen of axonemal doublet microtubules. The sequence is that of Tektin-like protein 1 from Homo sapiens (Human).